A 634-amino-acid polypeptide reads, in one-letter code: Chaperone protein DnaK (634 aa).

The residue at position 193 (threonine 193) is a Phosphothreonine; by autocatalysis. The tract at residues 597-634 (GNANNTSSTESTTTNNNNEEDSKVVDSDYQEIDKKDGK) is disordered. The segment covering 600–613 (NNTSSTESTTTNNN) has biased composition (low complexity). Residues 616–634 (EDSKVVDSDYQEIDKKDGK) are compositionally biased toward basic and acidic residues.

Belongs to the heat shock protein 70 family.

Acts as a chaperone. The polypeptide is Chaperone protein DnaK (Ehrlichia canis (strain Jake)).